We begin with the raw amino-acid sequence, 118 residues long: MPRVKRGVTARARHKKVLELAKGFRGRRKNVYRIAKQAVMKAGQYAYRDRRNRKRVFRRLWIARINAASRSHGITYSRFIAGIKKAAIDIDRKMLAELAVNDPAAFGSIVEKVKAQLA.

It belongs to the bacterial ribosomal protein bL20 family.

In terms of biological role, binds directly to 23S ribosomal RNA and is necessary for the in vitro assembly process of the 50S ribosomal subunit. It is not involved in the protein synthesizing functions of that subunit. The polypeptide is Large ribosomal subunit protein bL20 (Methylibium petroleiphilum (strain ATCC BAA-1232 / LMG 22953 / PM1)).